A 424-amino-acid polypeptide reads, in one-letter code: Probable methyltransferase EP424R (424 aa).

The Adrift-type SAM-dependent 2'-O-MTase domain occupies 103 to 315 (QIVTNAWLKM…TYIVGKNRLR (213 aa)). Gly135 and Asp228 together coordinate S-adenosyl-L-methionine. Lys268 (proton acceptor) is an active-site residue.

The protein localises to the virion. This is Probable methyltransferase EP424R from Ornithodoros (relapsing fever ticks).